Reading from the N-terminus, the 358-residue chain is Magnesium-protoporphyrin IX monomethyl ester [oxidative] cyclase 2 (358 aa).

It belongs to the AcsF family. Requires Fe cation as cofactor.

It catalyses the reaction Mg-protoporphyrin IX 13-monomethyl ester + 3 NADPH + 3 O2 + 2 H(+) = 3,8-divinyl protochlorophyllide a + 3 NADP(+) + 5 H2O. It functions in the pathway porphyrin-containing compound metabolism; chlorophyll biosynthesis (light-independent). Catalyzes the formation of the isocyclic ring in chlorophyll biosynthesis. Mediates the cyclase reaction, which results in the formation of divinylprotochlorophyllide (Pchlide) characteristic of all chlorophylls from magnesium-protoporphyrin IX 13-monomethyl ester (MgPMME). In Synechocystis sp. (strain ATCC 27184 / PCC 6803 / Kazusa), this protein is Magnesium-protoporphyrin IX monomethyl ester [oxidative] cyclase 2.